We begin with the raw amino-acid sequence, 126 residues long: Holo-[acyl-carrier-protein] synthase (126 aa).

Aspartate 9 and glutamate 58 together coordinate Mg(2+).

The protein belongs to the P-Pant transferase superfamily. AcpS family. Requires Mg(2+) as cofactor.

It is found in the cytoplasm. It carries out the reaction apo-[ACP] + CoA = holo-[ACP] + adenosine 3',5'-bisphosphate + H(+). Transfers the 4'-phosphopantetheine moiety from coenzyme A to a Ser of acyl-carrier-protein. This Escherichia coli O17:K52:H18 (strain UMN026 / ExPEC) protein is Holo-[acyl-carrier-protein] synthase.